Here is a 38-residue protein sequence, read N- to C-terminus: Photosystem II reaction center protein L (38 aa).

A helical transmembrane segment spans residues 17–37 (SLFWGLLLIFVLAVLFSSYFF).

Belongs to the PsbL family. As to quaternary structure, PSII is composed of 1 copy each of membrane proteins PsbA, PsbB, PsbC, PsbD, PsbE, PsbF, PsbH, PsbI, PsbJ, PsbK, PsbL, PsbM, PsbT, PsbX, PsbY, PsbZ, Psb30/Ycf12, at least 3 peripheral proteins of the oxygen-evolving complex and a large number of cofactors. It forms dimeric complexes.

Its subcellular location is the plastid. The protein resides in the chloroplast thylakoid membrane. One of the components of the core complex of photosystem II (PSII). PSII is a light-driven water:plastoquinone oxidoreductase that uses light energy to abstract electrons from H(2)O, generating O(2) and a proton gradient subsequently used for ATP formation. It consists of a core antenna complex that captures photons, and an electron transfer chain that converts photonic excitation into a charge separation. This subunit is found at the monomer-monomer interface and is required for correct PSII assembly and/or dimerization. In Rhodomonas salina (Cryptomonas salina), this protein is Photosystem II reaction center protein L.